Reading from the N-terminus, the 252-residue chain is Flap endonuclease Xni (252 aa).

Asp105 is a Mg(2+) binding site. A 5'-3' exonuclease domain is found at 162–250; sequence ERTQFIDYLA…LNANLSQFRL (89 aa). Residues Leu172, Ala173, Pro181, Val183, and Ile186 each contribute to the K(+) site. The tract at residues 185-190 is interaction with DNA; sequence GIGPKS.

Belongs to the Xni family. Mg(2+) is required as a cofactor. K(+) serves as cofactor.

Its function is as follows. Has flap endonuclease activity. During DNA replication, flap endonucleases cleave the 5'-overhanging flap structure that is generated by displacement synthesis when DNA polymerase encounters the 5'-end of a downstream Okazaki fragment. In Shewanella woodyi (strain ATCC 51908 / MS32), this protein is Flap endonuclease Xni.